Reading from the N-terminus, the 198-residue chain is FMN-dependent NADH:quinone oxidoreductase (198 aa).

FMN contacts are provided by residues Ser-10, 16 to 18 (SQS), 94 to 97 (MYNF), and 138 to 141 (TRGG).

This sequence belongs to the azoreductase type 1 family. In terms of assembly, homodimer. The cofactor is FMN.

It catalyses the reaction 2 a quinone + NADH + H(+) = 2 a 1,4-benzosemiquinone + NAD(+). It carries out the reaction N,N-dimethyl-1,4-phenylenediamine + anthranilate + 2 NAD(+) = 2-(4-dimethylaminophenyl)diazenylbenzoate + 2 NADH + 2 H(+). Functionally, quinone reductase that provides resistance to thiol-specific stress caused by electrophilic quinones. Its function is as follows. Also exhibits azoreductase activity. Catalyzes the reductive cleavage of the azo bond in aromatic azo compounds to the corresponding amines. The sequence is that of FMN-dependent NADH:quinone oxidoreductase from Shewanella baltica (strain OS195).